A 619-amino-acid polypeptide reads, in one-letter code: Dihydroxy-acid dehydratase (619 aa).

D81 is a Mg(2+) binding site. C122 provides a ligand contact to [2Fe-2S] cluster. 2 residues coordinate Mg(2+): D123 and K124. K124 is subject to N6-carboxylysine. C201 lines the [2Fe-2S] cluster pocket. E496 provides a ligand contact to Mg(2+). S522 acts as the Proton acceptor in catalysis.

This sequence belongs to the IlvD/Edd family. Homodimer. It depends on [2Fe-2S] cluster as a cofactor. Mg(2+) serves as cofactor.

The catalysed reaction is (2R)-2,3-dihydroxy-3-methylbutanoate = 3-methyl-2-oxobutanoate + H2O. It carries out the reaction (2R,3R)-2,3-dihydroxy-3-methylpentanoate = (S)-3-methyl-2-oxopentanoate + H2O. The protein operates within amino-acid biosynthesis; L-isoleucine biosynthesis; L-isoleucine from 2-oxobutanoate: step 3/4. Its pathway is amino-acid biosynthesis; L-valine biosynthesis; L-valine from pyruvate: step 3/4. Functions in the biosynthesis of branched-chain amino acids. Catalyzes the dehydration of (2R,3R)-2,3-dihydroxy-3-methylpentanoate (2,3-dihydroxy-3-methylvalerate) into 2-oxo-3-methylpentanoate (2-oxo-3-methylvalerate) and of (2R)-2,3-dihydroxy-3-methylbutanoate (2,3-dihydroxyisovalerate) into 2-oxo-3-methylbutanoate (2-oxoisovalerate), the penultimate precursor to L-isoleucine and L-valine, respectively. The chain is Dihydroxy-acid dehydratase from Burkholderia vietnamiensis (strain G4 / LMG 22486) (Burkholderia cepacia (strain R1808)).